A 410-amino-acid chain; its full sequence is uncharacterized protein (410 aa).

Position 87 (histidine 87) interacts with Zn(2+). Aspartate 89 is a catalytic residue. Residue aspartate 120 participates in Zn(2+) binding. The active-site Proton acceptor is glutamate 154. Residues glutamate 155, aspartate 184, and histidine 387 each coordinate Zn(2+).

The protein belongs to the peptidase M20A family. The cofactor is Zn(2+). It depends on Co(2+) as a cofactor.

This is an uncharacterized protein from Methanocaldococcus jannaschii (strain ATCC 43067 / DSM 2661 / JAL-1 / JCM 10045 / NBRC 100440) (Methanococcus jannaschii).